We begin with the raw amino-acid sequence, 795 residues long: Forkhead box protein P4 (795 aa).

Over residues 1–25 (MMVESASETIRSAPSGQNGVGSLSA) the composition is skewed to polar residues. The tract at residues 1–62 (MMVESASETI…SGGADSNGEM (62 aa)) is disordered. Residues 36–45 (AGTAPAAGRD) show a composition bias toward low complexity. 2 positions are modified to phosphoserine: serine 58 and serine 92. A Glycyl lysine isopeptide (Lys-Gly) (interchain with G-Cter in SUMO2) cross-link involves residue lysine 181. Disordered stretches follow at residues 233 to 252 (PQLW…SGRQ) and 265 to 310 (TSFA…PLYG). The segment covering 292-303 (SRRDSSSHEETP) has biased composition (basic and acidic residues). A C2H2-type zinc finger spans residues 312–337 (GECKWPGCETLCEDLGQFIKHLNTEH). Positions 354–375 (VQQLEIQLAKESERLQAMMAHL) are leucine-zipper. The segment at 379–437 (PSEPKPFSQPVTVSADPFPDGLVHPPTSAAAPVTPLRPPGLGSASLHSGGPARRRSNDK) is disordered. Lysine 383 participates in a covalent cross-link: Glycyl lysine isopeptide (Lys-Gly) (interchain with G-Cter in SUMO2). Residues 459 to 549 (RPPFTYASLI…PPKMTGSPTL (91 aa)) constitute a DNA-binding region (fork-head). Serine 546 bears the Phosphoserine mark. The segment at 589–671 (ASSLLPLSQE…LEEDLGGEDM (83 aa)) is disordered. Residues 609–627 (SNGSSSPPRLSPPQYSHQI) are compositionally biased toward polar residues. The span at 628-642 (QVKEEPAEAEEDRRP) shows a compositional bias: basic and acidic residues.

Forms homodimers and heterodimers with FOXP1 and FOXP2. Dimerization is required for DNA-binding. Expressed in the adult heart, brain, spleen lung, liver, kidney and testes.

The protein localises to the nucleus. Functionally, transcriptional repressor that represses lung-specific expression. This is Forkhead box protein P4 from Mus musculus (Mouse).